Here is a 315-residue protein sequence, read N- to C-terminus: C1GALT1-specific chaperone 1-like protein (315 aa).

Residues 1–8 are Cytoplasmic-facing; sequence MVSASGTS. A helical; Signal-anchor for type II membrane protein transmembrane segment spans residues 9-29; sequence FFKGMLLGSISWVLITMFGQI. Residues 30-315 lie on the Lumenal side of the membrane; that stretch reads HIRHRGQTQD…FLPPVGSEND (286 aa). N-linked (GlcNAc...) asparagine glycans are attached at residues asparagine 55 and asparagine 301.

Belongs to the glycosyltransferase 31 family. Beta3-Gal-T subfamily.

The protein localises to the membrane. This chain is C1GALT1-specific chaperone 1-like protein, found in Homo sapiens (Human).